Reading from the N-terminus, the 331-residue chain is Phosphoribosylformylglycinamidine cyclo-ligase (331 aa).

The protein belongs to the AIR synthase family.

Its subcellular location is the cytoplasm. The enzyme catalyses 2-formamido-N(1)-(5-O-phospho-beta-D-ribosyl)acetamidine + ATP = 5-amino-1-(5-phospho-beta-D-ribosyl)imidazole + ADP + phosphate + H(+). The protein operates within purine metabolism; IMP biosynthesis via de novo pathway; 5-amino-1-(5-phospho-D-ribosyl)imidazole from N(2)-formyl-N(1)-(5-phospho-D-ribosyl)glycinamide: step 2/2. This is Phosphoribosylformylglycinamidine cyclo-ligase from Clostridium botulinum (strain Langeland / NCTC 10281 / Type F).